The primary structure comprises 657 residues: N-acetylgalactosaminyltransferase 7 (657 aa).

Residues 1-6 (MRLKIG) are Cytoplasmic-facing. A helical; Signal-anchor for type II membrane protein transmembrane segment spans residues 7 to 29 (FILRSLLVVGSFLGLVVLWSSLT). The Lumenal portion of the chain corresponds to 30–657 (PRPDDPSPLS…KWEMNNIHSV (628 aa)). A disordered region spans residues 31–66 (RPDDPSPLSRMREDRDVNDPMPNRGGNGLAPGEDRF). Cystine bridges form between Cys197–Cys435, Cys426–Cys507, Cys545–Cys562, Cys585–Cys600, and Cys625–Cys640. Residues 206–317 (LLTSSVVIVF…VNWYAPLVAP (112 aa)) form a catalytic subdomain A region. Asp247 and Arg277 together coordinate substrate. Mn(2+)-binding residues include Asp301 and His303. Residues 381–443 (PYRSPAMAGG…PCSRVGHIYR (63 aa)) form a catalytic subdomain B region. Position 412 (Trp412) interacts with substrate. His440 contributes to the Mn(2+) binding site. Arg443 lines the substrate pocket. Positions 532–652 (VDWGEIRGFE…SKTTQKWEMN (121 aa)) constitute a Ricin B-type lectin domain.

This sequence belongs to the glycosyltransferase 2 family. GalNAc-T subfamily. The cofactor is Mn(2+).

The protein localises to the golgi apparatus membrane. The enzyme catalyses L-seryl-[protein] + UDP-N-acetyl-alpha-D-galactosamine = a 3-O-[N-acetyl-alpha-D-galactosaminyl]-L-seryl-[protein] + UDP + H(+). It carries out the reaction L-threonyl-[protein] + UDP-N-acetyl-alpha-D-galactosamine = a 3-O-[N-acetyl-alpha-D-galactosaminyl]-L-threonyl-[protein] + UDP + H(+). It participates in protein modification; protein glycosylation. Its function is as follows. Glycopeptide transferase involved in O-linked oligosaccharide biosynthesis, which catalyzes the transfer of an N-acetyl-D-galactosamine residue to an already glycosylated peptide. In contrast to other proteins of the family, it does not act as a peptide transferase that transfers GalNAc onto serine or threonine residue on the protein receptor, but instead requires the prior addition of a GalNAc on a peptide before adding additional GalNAc moieties. Some peptide transferase activity is however not excluded, considering that its appropriate peptide substrate may remain unidentified. The sequence is that of N-acetylgalactosaminyltransferase 7 (GALNT7) from Pongo abelii (Sumatran orangutan).